A 424-amino-acid polypeptide reads, in one-letter code: MHLNSSVPQGTPGEPDAQPFSGPQSEMEATFLALSLSNGSGNTSESDTAGPNSDLDVNTDIYSKVLVTAIYLALFVVGTVGNSVTAFTLARKKSLQSLQSTVHYHLGSLALSDLLILLLAMPVELYNFIWVHHPWAFGDAGCRGYYFLRDACTYATALNVASLSVERYLAICHPFKAKTLMSRSRTKKFISAIWLASALLAIPMLFTMGLQNRSGDGTHPGGLVCTPIVDTATVKVVIQVNTFMSFLFPMLVISILNTVIANKLTVMVHQAAEQGRVCTVGTHNGLEHSTFNMTIEPGRVQALRHGVLVLRAVVIAFVVCWLPYHVRRLMFCYISDEQWTTFLFDFYHYFYMLTNALFYVSSAINPILYNLVSANFRQVFLSTLACLCPGWRHRRKKRPTFSRKPNSMSSNHAFSTSATRETLY.

Positions 1–23 are disordered; it reads MHLNSSVPQGTPGEPDAQPFSGP. The Extracellular segment spans residues 1–68; that stretch reads MHLNSSVPQG…TDIYSKVLVT (68 aa). N-linked (GlcNAc...) asparagine glycans are attached at residues N4, N38, and N42. The chain crosses the membrane as a helical span at residues 69 to 89; it reads AIYLALFVVGTVGNSVTAFTL. Over 90-103 the chain is Cytoplasmic; sequence ARKKSLQSLQSTVH. A helical transmembrane segment spans residues 104–123; it reads YHLGSLALSDLLILLLAMPV. Topologically, residues 124–143 are extracellular; it reads ELYNFIWVHHPWAFGDAGCR. A disulfide bridge links C142 with C225. The chain crosses the membrane as a helical span at residues 144–165; it reads GYYFLRDACTYATALNVASLSV. Residues 166 to 185 are Cytoplasmic-facing; the sequence is ERYLAICHPFKAKTLMSRSR. Residues 186 to 206 form a helical membrane-spanning segment; the sequence is TKKFISAIWLASALLAIPMLF. Residues 207-235 lie on the Extracellular side of the membrane; it reads TMGLQNRSGDGTHPGGLVCTPIVDTATVK. A helical membrane pass occupies residues 236 to 260; the sequence is VVIQVNTFMSFLFPMLVISILNTVI. The Cytoplasmic portion of the chain corresponds to 261–308; it reads ANKLTVMVHQAAEQGRVCTVGTHNGLEHSTFNMTIEPGRVQALRHGVL. Residues 309 to 330 form a helical membrane-spanning segment; that stretch reads VLRAVVIAFVVCWLPYHVRRLM. Positions 326–349 are neurotensin binding; that stretch reads VRRLMFCYISDEQWTTFLFDFYHY. Over 331–348 the chain is Extracellular; it reads FCYISDEQWTTFLFDFYH. The helical transmembrane segment at 349–369 threads the bilayer; it reads YFYMLTNALFYVSSAINPILY. The Cytoplasmic segment spans residues 370–424; the sequence is NLVSANFRQVFLSTLACLCPGWRHRRKKRPTFSRKPNSMSSNHAFSTSATRETLY. Residues C386 and C388 are each lipidated (S-palmitoyl cysteine). A disordered region spans residues 397–424; sequence KRPTFSRKPNSMSSNHAFSTSATRETLY. Polar residues predominate over residues 403-424; it reads RKPNSMSSNHAFSTSATRETLY.

The protein belongs to the G-protein coupled receptor 1 family. Neurotensin receptor subfamily. NTSR1 sub-subfamily. In terms of assembly, interacts (palmitoylated form) with GNA11. N-glycosylated. Post-translationally, palmitoylated; this is required for normal localization at membrane rafts and normal GNA11-mediated activation of down-stream signaling cascades. The palmitoylation level increases in response to neurotensin treatment. Detected in brain and small intestine.

It is found in the cell membrane. Its subcellular location is the membrane raft. Its function is as follows. G-protein coupled receptor for the tridecapeptide neurotensin (NTS). Signaling is effected via G proteins that activate a phosphatidylinositol-calcium second messenger system. Signaling leads to the activation of downstream MAP kinases and protects cells against apoptosis. The chain is Neurotensin receptor type 1 (Ntsr1) from Rattus norvegicus (Rat).